A 55-amino-acid polypeptide reads, in one-letter code: Large ribosomal subunit protein bL33 (55 aa).

Basic and acidic residues predominate over residues 1-11 (MAKGGREKIKL). The disordered stretch occupies residues 1–29 (MAKGGREKIKLESSAGTGHFYTTSKNKRT). A compositionally biased stretch (polar residues) spans 14–24 (SAGTGHFYTTS).

The protein belongs to the bacterial ribosomal protein bL33 family.

The chain is Large ribosomal subunit protein bL33 from Polynucleobacter asymbioticus (strain DSM 18221 / CIP 109841 / QLW-P1DMWA-1) (Polynucleobacter necessarius subsp. asymbioticus).